The primary structure comprises 223 residues: GrpE protein homolog, mitochondrial (223 aa).

The protein belongs to the GrpE family. Component of the PAM complex, at least composed of mtHsp70, mge1, tim44, pam16, pam17 and pam18.

The protein resides in the mitochondrion matrix. Functionally, essential component of the PAM complex, a complex required for the translocation of transit peptide-containing proteins from the inner membrane into the mitochondrial matrix in an ATP-dependent manner. Seems to control the nucleotide-dependent binding of ssc1 to substrate proteins. The chain is GrpE protein homolog, mitochondrial (mge1) from Schizosaccharomyces pombe (strain 972 / ATCC 24843) (Fission yeast).